A 652-amino-acid polypeptide reads, in one-letter code: Acetyl-coenzyme A synthetase (652 aa).

Residues 189-192 and threonine 311 each bind CoA; that span reads RGGK. Residues 387–389, 411–416, aspartate 500, and arginine 515 each bind ATP; these read GEP and DTWWQT. Serine 523 contributes to the CoA binding site. Arginine 526 provides a ligand contact to ATP. 3 residues coordinate Mg(2+): valine 537, histidine 539, and valine 542. Residue arginine 584 participates in CoA binding. N6-acetyllysine is present on lysine 609.

This sequence belongs to the ATP-dependent AMP-binding enzyme family. It depends on Mg(2+) as a cofactor. In terms of processing, acetylated. Deacetylation by the SIR2-homolog deacetylase activates the enzyme.

It carries out the reaction acetate + ATP + CoA = acetyl-CoA + AMP + diphosphate. Its function is as follows. Catalyzes the conversion of acetate into acetyl-CoA (AcCoA), an essential intermediate at the junction of anabolic and catabolic pathways. AcsA undergoes a two-step reaction. In the first half reaction, AcsA combines acetate with ATP to form acetyl-adenylate (AcAMP) intermediate. In the second half reaction, it can then transfer the acetyl group from AcAMP to the sulfhydryl group of CoA, forming the product AcCoA. This chain is Acetyl-coenzyme A synthetase, found in Rhizobium rhizogenes (Agrobacterium rhizogenes).